Reading from the N-terminus, the 448-residue chain is Multiple inositol polyphosphate phosphatase 1 (448 aa).

A signal peptide spans 1–19 (MAPRRAACLLPLLVAVASA). H69 is a catalytic residue. N-linked (GlcNAc...) asparagine glycosylation is found at N203, N257, N409, and N441. A Prevents secretion from ER motif is present at residues 445-448 (ADEL).

It belongs to the histidine acid phosphatase family. MINPP1 subfamily. Post-translationally, N-glycosylated. Present in growth plate chondrocytes but not detectable in articular chondrocytes (at protein level). Spatially restricted to chondrocytes in the lower portion of the proliferative zone and the upper portion of the hypertrophic zone in the growth plate of long bones (at protein level). Weakly expressed in kidney, liver, lung, skin and spleen, and not detected in brain, heart and muscle.

It is found in the endoplasmic reticulum lumen. It localises to the secreted. The protein localises to the cell membrane. The catalysed reaction is 1D-myo-inositol hexakisphosphate + H2O = 1D-myo-inositol 1,2,4,5,6-pentakisphosphate + phosphate. The enzyme catalyses 1D-myo-inositol 1,2,4,5,6-pentakisphosphate + H2O = 1D-myo-inositol 1,2,5,6-tetrakisphosphate + phosphate. It catalyses the reaction 1D-myo-inositol 1,2,5,6-tetrakisphosphate + H2O = 1D-myo-inositol 1,2,6-trisphosphate + phosphate. It carries out the reaction 1D-myo-inositol 1,2,6-trisphosphate + H2O = 1D-myo-inositol 1,2-bisphosphate + phosphate. The catalysed reaction is 1D-myo-inositol 1,2-bisphosphate + H2O = 1D-myo-inositol 2-phosphate + phosphate. The enzyme catalyses 1D-myo-inositol hexakisphosphate + H2O = 1D-myo-inositol 1,2,3,5,6-pentakisphosphate + phosphate. It catalyses the reaction 1D-myo-inositol 1,2,3,5,6-pentakisphosphate + H2O = 1D-myo-inositol 1,2,3,6-tetrakisphosphate + phosphate. It carries out the reaction 1D-myo-inositol 1,2,3,6-tetrakisphosphate + H2O = 1D-myo-inositol 1,2,3-trisphosphate + phosphate. The catalysed reaction is 1D-myo-inositol 1,2,3-trisphosphate + H2O = 1D-myo-inositol 2,3-bisphosphate + phosphate. The enzyme catalyses 1D-myo-inositol 2,3-bisphosphate + H2O = 1D-myo-inositol 2-phosphate + phosphate. It catalyses the reaction 1D-myo-inositol 1,3,4,5,6-pentakisphosphate + H2O = 1D-myo-inositol 1,4,5,6-tetrakisphosphate + phosphate. It carries out the reaction 1D-myo-inositol 1,4,5,6-tetrakisphosphate + H2O = 1D-myo-inositol 1,4,5-trisphosphate + phosphate. The catalysed reaction is (2R)-2,3-bisphosphoglycerate + H2O = (2R)-2-phosphoglycerate + phosphate. In terms of biological role, multiple inositol polyphosphate phosphatase that hydrolyzes 1D-myo-inositol 1,3,4,5,6-pentakisphosphate (InsP5[2OH]) and 1D-myo-inositol hexakisphosphate (InsP6) to a range of less phosphorylated inositol phosphates. This regulates the availability of these various small molecule second messengers and metal chelators which control many aspects of cell physiology. Has a weak in vitro activity towards 1D-myo-inositol 1,4,5-trisphosphate which is unlikely to be physiologically relevant. By regulating intracellular inositol polyphosphates pools, which act as metal chelators, it may control the availability of intracellular calcium and iron, which are important for proper neuronal development and homeostasis. May have a dual substrate specificity, and function as a 2,3-bisphosphoglycerate 3-phosphatase hydrolyzing 2,3-bisphosphoglycerate to 2-phosphoglycerate. 2,3-bisphosphoglycerate (BPG) is formed as part of the Rapoport-Luebering glycolytic bypass and is a regulator of systemic oxygen homeostasis as the major allosteric effector of hemoglobin. The polypeptide is Multiple inositol polyphosphate phosphatase 1 (MINPP1) (Gallus gallus (Chicken)).